Reading from the N-terminus, the 1611-residue chain is SH3 domain-containing protein C23A1.17 (1611 aa).

An SH3 domain is found at 3-67 (SFPTRVVALY…PKDFTEPAED (65 aa)). 4 disordered regions span residues 275-648 (THPA…PTSL), 662-741 (IDPP…PPGL), 762-851 (AVPR…NSLN), and 886-1365 (TPST…FSAK). A compositionally biased stretch (polar residues) spans 278–296 (AASSTMATESSHQSPSADS). Basic and acidic residues predominate over residues 300–312 (ELSKSQRVAKDDD). The segment covering 316–330 (VSNTANSDEPASSSK) has biased composition (polar residues). 2 stretches are compositionally biased toward acidic residues: residues 361-373 (SEQE…DAES) and 387-420 (SEPE…QIDP). The segment covering 421–433 (EEAKRIALRERMA) has biased composition (basic and acidic residues). Low complexity predominate over residues 472 to 494 (STTNDSSPPKDSSSTSTQPTEQS). The segment covering 576–586 (TQETSEQQVHK) has biased composition (polar residues). The segment covering 605–619 (FDKETLASNEAHEAV) has biased composition (basic and acidic residues). Over residues 637-648 (SSSVVTPSPTSL) the composition is skewed to low complexity. Polar residues-rich tracts occupy residues 799-808 (SRPSTGSQLR), 886-902 (TPST…SNVA), and 923-940 (ATHQ…QLGS). 3 stretches are compositionally biased toward pro residues: residues 963–974 (PAAPPSIPPPLP), 1022–1053 (PPVP…PPVP), and 1076–1241 (IPAP…PVPA). Over residues 1242 to 1278 (PSSEAPSVSTPRSSVPSPHSNASPSPTSSSMASAAPA) the composition is skewed to low complexity. A phosphoserine mark is found at Ser1258, Ser1261, and Ser1266. A compositionally biased stretch (basic residues) spans 1300-1312 (KSSKSGEHHHHHN). Residues 1317 to 1327 (DSSSTRTSLAH) are compositionally biased toward polar residues. The span at 1340 to 1350 (RSSSRASKKPS) shows a compositional bias: low complexity. Polar residues predominate over residues 1351-1362 (IVSTTGPFNESF). Ser1379 bears the Phosphoserine mark. A Phosphothreonine modification is found at Thr1380.

The protein localises to the cytoplasm. The sequence is that of SH3 domain-containing protein C23A1.17 from Schizosaccharomyces pombe (strain 972 / ATCC 24843) (Fission yeast).